The primary structure comprises 258 residues: Imidazole glycerol phosphate synthase subunit HisF (258 aa).

Active-site residues include aspartate 11 and aspartate 130.

The protein belongs to the HisA/HisF family. As to quaternary structure, heterodimer of HisH and HisF.

It is found in the cytoplasm. The catalysed reaction is 5-[(5-phospho-1-deoxy-D-ribulos-1-ylimino)methylamino]-1-(5-phospho-beta-D-ribosyl)imidazole-4-carboxamide + L-glutamine = D-erythro-1-(imidazol-4-yl)glycerol 3-phosphate + 5-amino-1-(5-phospho-beta-D-ribosyl)imidazole-4-carboxamide + L-glutamate + H(+). Its pathway is amino-acid biosynthesis; L-histidine biosynthesis; L-histidine from 5-phospho-alpha-D-ribose 1-diphosphate: step 5/9. IGPS catalyzes the conversion of PRFAR and glutamine to IGP, AICAR and glutamate. The HisF subunit catalyzes the cyclization activity that produces IGP and AICAR from PRFAR using the ammonia provided by the HisH subunit. This chain is Imidazole glycerol phosphate synthase subunit HisF, found in Yersinia enterocolitica serotype O:8 / biotype 1B (strain NCTC 13174 / 8081).